Consider the following 178-residue polypeptide: Peptide methionine sulfoxide reductase MsrA (178 aa).

Cys11 is an active-site residue.

The protein belongs to the MsrA Met sulfoxide reductase family.

The catalysed reaction is L-methionyl-[protein] + [thioredoxin]-disulfide + H2O = L-methionyl-(S)-S-oxide-[protein] + [thioredoxin]-dithiol. The enzyme catalyses [thioredoxin]-disulfide + L-methionine + H2O = L-methionine (S)-S-oxide + [thioredoxin]-dithiol. Its function is as follows. Has an important function as a repair enzyme for proteins that have been inactivated by oxidation. Catalyzes the reversible oxidation-reduction of methionine sulfoxide in proteins to methionine. In Natronomonas pharaonis (strain ATCC 35678 / DSM 2160 / CIP 103997 / JCM 8858 / NBRC 14720 / NCIMB 2260 / Gabara) (Halobacterium pharaonis), this protein is Peptide methionine sulfoxide reductase MsrA.